The chain runs to 281 residues: Nhr-229 coiled coil domain containing nccd-1 (281 aa).

This is Nhr-229 coiled coil domain containing nccd-1 from Caenorhabditis elegans.